Reading from the N-terminus, the 253-residue chain is Transcription factor bHLH106 (253 aa).

The region spanning 66–115 (AALRNHKEAERRRRERINSHLNKLRNVLSCNSKTDKATLLAKVVQRVREL) is the bHLH domain.

Homodimer.

The protein resides in the nucleus. This Arabidopsis thaliana (Mouse-ear cress) protein is Transcription factor bHLH106 (BHLH106).